Here is a 255-residue protein sequence, read N- to C-terminus: Acid phosphatase 1 (255 aa).

Residues 1–15 form the signal peptide; it reads MRIFVFLVLLTVAIG. The N-linked (GlcNAc...) asparagine glycan is linked to Asn-142.

The protein belongs to the APS1/VSP family.

The enzyme catalyses a phosphate monoester + H2O = an alcohol + phosphate. The protein is Acid phosphatase 1 (APS1) of Solanum lycopersicum (Tomato).